Here is a 126-residue protein sequence, read N- to C-terminus: uncharacterized protein (126 aa).

An N-terminal signal peptide occupies residues 1-23; that stretch reads MLKKLIMGFFLLILLGIAGVAVM.

This is an uncharacterized protein from Archaeoglobus fulgidus (strain ATCC 49558 / DSM 4304 / JCM 9628 / NBRC 100126 / VC-16).